Reading from the N-terminus, the 130-residue chain is Protein ApaG (130 aa).

An ApaG domain is found at 3 to 127; it reads SAVTRGIEVT…FSLDVPEQRR (125 aa).

The protein is Protein ApaG of Brucella canis (strain ATCC 23365 / NCTC 10854 / RM-666).